Reading from the N-terminus, the 212-residue chain is Adenylate kinase (212 aa).

10-15 (GAGKGT) serves as a coordination point for ATP. Positions 30–59 (STGDMFRAAMANQTEMGRLAKSYIDKGELV) are NMP. Residues Thr31, Arg36, 57-59 (ELV), 86-89 (GYPR), and Gln93 each bind AMP. The LID stretch occupies residues 127–159 (GRIINRKTGETFHKVFNPPVDYKEEDYYQREDD). ATP-binding positions include Arg128 and 137 to 138 (TF). The AMP site is built by Arg156 and Arg167. Gln195 serves as a coordination point for ATP.

This sequence belongs to the adenylate kinase family. In terms of assembly, monomer.

It localises to the cytoplasm. It carries out the reaction AMP + ATP = 2 ADP. It functions in the pathway purine metabolism; AMP biosynthesis via salvage pathway; AMP from ADP: step 1/1. Functionally, catalyzes the reversible transfer of the terminal phosphate group between ATP and AMP. Plays an important role in cellular energy homeostasis and in adenine nucleotide metabolism. The sequence is that of Adenylate kinase from Streptococcus agalactiae serotype III (strain NEM316).